A 103-amino-acid polypeptide reads, in one-letter code: Large ribosomal subunit protein bL21 (103 aa).

It belongs to the bacterial ribosomal protein bL21 family. Part of the 50S ribosomal subunit. Contacts protein L20.

Functionally, this protein binds to 23S rRNA in the presence of protein L20. The sequence is that of Large ribosomal subunit protein bL21 from Shewanella baltica (strain OS223).